Consider the following 90-residue polypeptide: Small ribosomal subunit protein bS20 (90 aa).

Belongs to the bacterial ribosomal protein bS20 family.

Functionally, binds directly to 16S ribosomal RNA. The sequence is that of Small ribosomal subunit protein bS20 from Francisella tularensis subsp. tularensis (strain FSC 198).